The following is a 1233-amino-acid chain: DNA-directed RNA polymerase subunit beta' (1233 aa).

Residues cysteine 61, cysteine 63, cysteine 76, and cysteine 79 each contribute to the Zn(2+) site. The Mg(2+) site is built by aspartate 455, aspartate 457, and aspartate 459. Zn(2+) is bound by residues cysteine 824, cysteine 898, cysteine 905, and cysteine 908. A compositionally biased stretch (basic and acidic residues) spans 1211–1220; the sequence is ELQKAFDKEP. Residues 1211–1233 form a disordered region; it reads ELQKAFDKEPASSTGNKASNSAK. The span at 1221-1233 shows a compositional bias: polar residues; that stretch reads ASSTGNKASNSAK.

It belongs to the RNA polymerase beta' chain family. As to quaternary structure, the RNAP catalytic core consists of 2 alpha, 1 beta, 1 beta' and 1 omega subunit. When a sigma factor is associated with the core the holoenzyme is formed, which can initiate transcription. Requires Mg(2+) as cofactor. It depends on Zn(2+) as a cofactor.

The enzyme catalyses RNA(n) + a ribonucleoside 5'-triphosphate = RNA(n+1) + diphosphate. Its function is as follows. DNA-dependent RNA polymerase catalyzes the transcription of DNA into RNA using the four ribonucleoside triphosphates as substrates. The sequence is that of DNA-directed RNA polymerase subunit beta' from Oenococcus oeni (strain ATCC BAA-331 / PSU-1).